A 1129-amino-acid chain; its full sequence is MAYMLAIANFHFFKFYTRMRKKHENNSCNEKDKDENLFKIILAIFLQEKKKYDCISSGSIMTASEEYLENLKPFQVGLPPHDPESNKKRYLLKDANGKKFDLEGTTKRFEHLLSLSGLFKHFIESKAAKDPKFRQVLDVLEENKANGKGKGKHQDVRRRKTEHEEDAELLKEEDSDDDESIEFQFRESPAYVNGQLRPYQIQGVNWLVSLHKNKIAGILADEMGLGKTLQTISFLGYLRYIEKIPGPFLVIAPKSTLNNWLREINRWTPDVNAFILQGDKEERAELIQKKLLGCDFDVVIASYEIIIREKSPLKKINWEYIIIDEAHRIKNEESMLSQVLREFTSRNRLLITGTPLQNNLHELWALLNFLLPDIFSDAQDFDDWFSSESTEEDQDKIVKQLHTVLQPFLLRRIKSDVETSLLPKKELNLYVGMSSMQKKWYKKILEKDLDAVNGSNGSKESKTRLLNIMMQLRKCCNHPYLFDGAEPGPPYTTDEHLVYNAAKLQVLDKLLKKLKEEGSRVLIFSQMSRLLDILEDYCYFRNYEYCRIDGSTAHEDRIQAIDDYNAPDSKKFVFLLTTRAGGLGINLTSADVVVLYDSDWNPQADLQAMDRAHRIGQKKQVKVFRLVTDNSVEEKILERATQKLRLDQLVIQQNRTSLKKKENKADSKDALLSMIQHGAADVFKSGTSTGSAGTPEPGSGEKGDDIDLDELLLKSENKTKSLNAKYETLGLDDLQKFNQDSAYEWNGQDFKKKIQRDIISPLLLNPTKRERKENYSIDNYYKDVLNTGRSSTPSHPRMPKPHVFHSHQLQPPQLKVLYEKERMWTAKKTGYVPTMDDVKAAYGDISDEEEKKQKLELLKLSVNNSQPLTEEEEKMKADWESEGFTNWNKLEFRKFITVSGKYGRNSIQAIARELAPGKTLEEVRAYAKAFWSNIERIEDYEKYLKIIENEEEKIKRVKMQQEALRRKLSEYKNPFFDLKLKHPPSSNNKRTYSEEEDRFILLMLFKYGLDRDDVYELVRDEIRDCPLFELDFYFRSRTPVELARRGNTLLQCLEKEFNAGIVLDDATKDRMKKEDENGKRIREEFADQTANEKENVDGVESKKAKIEDTSNVGTEQLVAEKIPENETTH.

The tract at residues 144 to 177 is disordered; sequence KANGKGKGKHQDVRRRKTEHEEDAELLKEEDSDD. Residues 147 to 160 show a composition bias toward basic residues; sequence GKGKGKHQDVRRRK. Positions 164-177 are enriched in acidic residues; sequence EEDAELLKEEDSDD. The 166-residue stretch at 208-373 folds into the Helicase ATP-binding domain; that stretch reads VSLHKNKIAG…WALLNFLLPD (166 aa). 221-228 serves as a coordination point for ATP; that stretch reads DEMGLGKT. Positions 324-327 match the DEAH box motif; it reads DEAH. The 152-residue stretch at 506 to 657 folds into the Helicase C-terminal domain; the sequence is VLDKLLKKLK…QLVIQQNRTS (152 aa). The disordered stretch occupies residues 683–705; sequence FKSGTSTGSAGTPEPGSGEKGDD. Threonine 694 carries the post-translational modification Phosphothreonine. Serine 846 carries the phosphoserine modification. 2 SANT domains span residues 882 to 935 and 988 to 1052; these read EGFT…SNIE and NKRT…LLQC. Residues 1073–1108 are compositionally biased toward basic and acidic residues; the sequence is KEDENGKRIREEFADQTANEKENVDGVESKKAKIED. The interval 1073–1129 is disordered; the sequence is KEDENGKRIREEFADQTANEKENVDGVESKKAKIEDTSNVGTEQLVAEKIPENETTH.

This sequence belongs to the SNF2/RAD54 helicase family. ISWI subfamily. Component of the ISW1A complex, which at least consists of ISW1 and IOC3. Component of the ISW1B complex, which at least consists of ISW1, IOC2 and IOC4.

It is found in the nucleus. In terms of biological role, catalytic component of ISW1-type complexes, which act by remodeling the chromatin by catalyzing an ATP-dependent alteration in the structure of nucleosomal DNA. They are involved in coordinating transcriptional repression, activation and elongation phases. The ISW1A complex represses gene expression at initiation through specific positioning of a promoter proximal dinucleosome. The ISW1B complex acts within coding regions to control the amount of RNA polymerase II released into productive elongation and to coordinate elongation with termination and pre-mRNA processing. This Saccharomyces cerevisiae (strain ATCC 204508 / S288c) (Baker's yeast) protein is ISWI chromatin-remodeling complex ATPase ISW1 (ISW1).